A 152-amino-acid polypeptide reads, in one-letter code: Ribosome maturation factor RimP (152 aa).

Belongs to the RimP family.

It is found in the cytoplasm. In terms of biological role, required for maturation of 30S ribosomal subunits. In Serratia proteamaculans (strain 568), this protein is Ribosome maturation factor RimP.